The primary structure comprises 1382 residues: MGVFMTERADLVFHNKVIDGTAMKRLISRLIDHFGMGYTSHILDQSKILGFQQATATSISLGIDDLLTIPSKEWLVQDTEQQRFILEKHYHYANVHAVEKLRQSIEIWYATSEYLRQEMNPNFRMTDPSNPVHLMSFSGARGNASQVHQLVGMRGLMSDPQGQMIDLPIQSNLREGLSLTEYIISCYGARKGVVDTAVRTSDAGYLTRRLVEVVQHIIVRRTDCGTIRSISVSPRKGMTEKIFVQTLIGRVLADDIYMGLRCIAVRKQEIGIGLANRLITFRARPIYIRTPFTCRSTSWICQLCYGRSPTHGDLVELGEAVGIIASQSIGEPGTQLTLRTFHTGGVFTGGTAEHVRAPSSGKIKFNEDLVHRTRTRHGHPAFLCSIGLYVTLEGRDIIHNLNIPPKGLILVQNGQYVESEQLIAEIRAGAFTLNFKERVRKHIYSESEGEMHWSTNVYHAPEYPYGNIHLLLKTSHLWILAGASRRSSIVSFSLHKDQDQMNVHSFSVEERYIYIFDLSMTNHRVKHKLLDTSGKKDREILEYSISDRIISNGHWNLISPSILQDNLDFLAKRRRNRFIIPLQYDQEREKELIPCFDISIEIPINGILRGNSILAYFDDPVYRRSSSGITKYGTLEVDSIVKKEDLIEYRGTKEFNQIQIKVDRFFFIPEEVHILPGSSSIMVRNNSLIGVHTRLTLNTRSKIGGLVRVERKKKSIELKIFSGNIHFPGETDKISRHSGILIPPGTGKKNFNQSKKELKNWIYVQRITPTKKKYFVSVRPVVTYEIADGINLATLFPQDLLQEKDNVQLRVVNYILYGNGKSIRGIYHTSSQLVRTCLVLNWDQEQNDSIEEVHTSFIEVRANDLIRDFIRIDLIKSTISYTGKRNDTGSSGLIPDNGLNSTNINPFYSKSKIQSLTQDQETIGMGTLLNRNKECQSLIILSSSNCSQIGPFNGSKYKNVTKESENIIPIMDFLGSLGTIVPKIANFYSSYHLITHNQILLKRFLLLDNSKQTFQVLKYGLIDENSRIYSPDPCSNIILNPFRLNWCFLRHNYCEETSTIISLGQFFCENICLFKYGPNINIKKSGQIIIVHVDSLVIRSAKPYLVTLGATVHGHYGKILYEGDRLVTFIYERSRSGDITQGLPKVEQVLEVRSIDSISMNLEKRVNSWNECISRILGRPWGFMIGSELTIAQSRISLVNRIQKVYRSQGVQIHNRHIEIIVRQVTSRVLVSEDGMSNVFSPGELIGLLRAERAGRALDEAICYRAILLGITRASLNTQSFISEASFQETTRVLAKAALRGRIDWLKGLKENVVLGGIIPVGTGFQKLVHRSRQDKNIHLEIKKNNLFDLEMRDILLHHRELFCSCIQDNLYETSEQSFTNS.

The Zn(2+) site is built by C224, C294, C301, and C304.

The protein belongs to the RNA polymerase beta' chain family. RpoC2 subfamily. In terms of assembly, in plastids the minimal PEP RNA polymerase catalytic core is composed of four subunits: alpha, beta, beta', and beta''. When a (nuclear-encoded) sigma factor is associated with the core the holoenzyme is formed, which can initiate transcription. It depends on Zn(2+) as a cofactor.

It localises to the plastid. The protein localises to the chloroplast. It catalyses the reaction RNA(n) + a ribonucleoside 5'-triphosphate = RNA(n+1) + diphosphate. Its function is as follows. DNA-dependent RNA polymerase catalyzes the transcription of DNA into RNA using the four ribonucleoside triphosphates as substrates. This is DNA-directed RNA polymerase subunit beta'' from Dioscorea elephantipes (Elephant's foot yam).